Here is a 1167-residue protein sequence, read N- to C-terminus: Rhoptry neck protein 2-like protein 2 (1167 aa).

Residues 1–20 (MSSNLAFLSLSLAESTASLG) form the signal peptide. The Cytoplasmic segment spans residues 21-977 (KSLEETRTRL…WVAKRSRSRK (957 aa)). The disordered stretch occupies residues 55 to 94 (GPGLSVEGKQTEQMSRKSAEDTRASSLSSDPDDGRAAQLA). Basic and acidic residues predominate over residues 68–77 (MSRKSAEDTR). A helical membrane pass occupies residues 978–998 (LAIVSVLSLGLIFAYTLLSAL). The Extracellular segment spans residues 999–1167 (DIAQFLTDSG…TPQRAQDGSR (169 aa)). A disulfide bridge links C1015 with C1026.

Belongs to the apicomplexan parasites RON2 family.

It is found in the secreted. It localises to the host cell membrane. Its function is as follows. May play a role in host cell invasion. This is Rhoptry neck protein 2-like protein 2 (RON2L2) from Toxoplasma gondii (strain ATCC 50611 / Me49).